A 136-amino-acid chain; its full sequence is Biopolymer transport protein exbD2 (136 aa).

The Cytoplasmic segment spans residues 1-23; the sequence is MAFSTGGNRGPMADINVTPLVDV. The helical transmembrane segment at 24–44 threads the bilayer; sequence MLVLLIIFIVTAPIMTYPIAV. Residues 45–136 lie on the Periplasmic side of the membrane; it reads DLPQRVLNPP…SQMKKIGFMQ (92 aa).

It belongs to the ExbD/TolR family. As to quaternary structure, the accessory proteins ExbB and ExbD seem to form a complex with TonB.

Its subcellular location is the cell inner membrane. Functionally, involved in the TonB-dependent energy-dependent transport of various receptor-bound substrates. The protein is Biopolymer transport protein exbD2 (exbD2) of Xanthomonas campestris pv. campestris (strain ATCC 33913 / DSM 3586 / NCPPB 528 / LMG 568 / P 25).